Reading from the N-terminus, the 1663-residue chain is MATDGASCEPDLSRAPEDAAGAAAEAAKKEFDVDTLSKSELRMLLSVMEGELEARDLVIEALRARRREVFIQERYGRFNLNDPFLALQRDYEAGAGDKEKKPVCTNPLSILEAVMAHCKKMQERMSAQLAAAESRQKKLEMEKLQLQALEQEHKKLAARLEEERGKNKQVVLMLVKECKQLSGKVIEEAQKLEDIMAKLEEEKKKTNELEEELSTEKRRSTEMEAQMEKQLSEFDTEREQLRAKLNREEAHTTDLKEEIDKMKKMIEQLKRGSDSKPSLSLPRKTKDRCLVSISVGTEGTVTRSVACQTDLVTESADHMKKLPLTMPVKPSTGSPLVSANAKGSVCTSATMARPGIDRQPSHGDLIGASVPAFPPPSANRIEENGPSTGSTPDPTSSTPPLPSNAAPPTTQTPGIAPQNSQAPPIHSLHSPCANASLHPGLNPRIQAARFRFQGNANDPDQNGNTTQSPPSRDVSPTSRDNLVAKQLARNTVTQALSRFTSPQAGAPSRPGAPPTGDVGTHPPVGRTSLKTHGVARVDRGNPPPIPPKKPGLSQTPSPPHPQLKVIIDSSRASNTAAKVDNKTVASPPSSLPQGNRVINEENLPKSSSPQLPPKPSIDLTVAPAGCAVSALATSQVGAWPAATPGLNQPACSDSSLVIPTTIAFCSSINPVSASSCRPGASDSLLVTASGWSPSLTPLLMSGGPAPLAGRPTLLQQAAAQGNVTLLSMLLNEEGLDINYSCEDGHSALYSAAKNGHTDCVRLLLSAEAQVNAADKNGFTPLCAAAAQGHFECVELLIAYDANINHAADGGQTPLYLACKNGNKECIKLLLEAGTNRSVKTTDGWTPVHAAVDTGNVDSLKLLMYHRILARGNSFNEEGSESSVFDLDGGEESPEGISKPVVPADLINHANREGWTAAHIAASKGFKNCLEILCRHGGLEPERRDKCNRTVHDVATDDCKHLLENLNALKIPLRISVGEIEPSNYGSDDLECENTICALNIRKQTSWDDFSKAVSQALINHFQAISSDGWWSLEDVTCNNTTDSNIGLSARSIRSITLGNVPWSVGQSFTQSPWDFMRKNKAEHITVLLSGPQEGCLSSVTYASMIPLQMMQNYLRLVEQYHNVIFHGPEGSLQDYIVHQLALCLKHRQMTAGFSCEIVRAEVDAGFSKEQLLDLFISSACLIPVKQSPSKKKIIIILENLEKSSLSELLRDFLAPLENRSTESPCTFQKGNGMSECYYFHENCFLMGTIAKACLQGSDLLVQQHFRWVQLRWDGEPMQGLLQRFLRRKVVNKFKGQAPSPCDPVCKIVDWALSVWRQLNSCLARLGTPEALLGPKYFLSCPVVPGHAQVTVKWMSKLWNGVIAPRVQEAILSRASVKRQPGFGQTTAKRHPSQGQQAVVKAALSILLNKAVLHGCPLPRAELDQHTADFRGGSFPLSIVSSYNSCNKKKGESGAWRKVNTSPRRKSGRFSLPTWNKPDLSTEGMKNKTISQLNCNRNASLSKQKSLENDLSLTLNLDQRLSLGSDDEADLVKELQSMCSSKSESDISKIADSRDDIRMFDSSGNNRVLSATINNLRMPVSQKEVSPLSSHQTTECSNSKSKTELGVSRVKSFLPVPRSKVTQCSQNTKRSSSSSNTRQIEINNNSKEENWNLHKNEHLEKPNK.

Disordered stretches follow at residues 1-23 (MATD…AGAA), 203-222 (KKKT…RSTE), 352-440 (ARPG…LHPG), 454-478 (GNAN…SPTS), and 498-616 (RFTS…PKPS). A coiled-coil region spans residues 119–276 (KKMQERMSAQ…EQLKRGSDSK (158 aa)). Residues 384 to 396 (NGPSTGSTPDPTS) are compositionally biased toward low complexity. Over residues 411-422 (QTPGIAPQNSQA) the composition is skewed to polar residues. Arg-498 bears the Asymmetric dimethylarginine mark. The span at 583 to 593 (TVASPPSSLPQ) shows a compositional bias: polar residues. 5 ANK repeats span residues 709 to 739 (GRPT…DINY), 743 to 772 (DGHS…QVNA), 776 to 805 (NGFT…NINH), 809 to 838 (GGQT…NRSV), and 842 to 871 (DGWT…LARG). A disordered region spans residues 876–897 (EEGSESSVFDLDGGEESPEGIS). The stretch at 912 to 942 (EGWTAAHIAASKGFKNCLEILCRHGGLEPER) is one ANK 6 repeat. A disordered region spans residues 1446 to 1485 (NKKKGESGAWRKVNTSPRRKSGRFSLPTWNKPDLSTEGMK). Phosphoserine is present on Ser-1524. 2 disordered regions span residues 1580 to 1602 (SQKE…KSKT) and 1615 to 1663 (VPRS…KPNK). Over residues 1582–1599 (KEVSPLSSHQTTECSNSK) the composition is skewed to polar residues. Over residues 1624–1638 (SQNTKRSSSSSNTRQ) the composition is skewed to low complexity. Positions 1645-1663 (SKEENWNLHKNEHLEKPNK) are enriched in basic and acidic residues.

As to quaternary structure, interacts with CTTN/cortactin SH3 domain. Interacts with STRN, STRN4/zinedin and MOB4/phocein; this interactions mediate the association with the STRIPAK core complex and may regulate dendritic spine distribution of the STRIPAK complex in hippocampal neurons. Activation of glutamate receptors weakens the interaction with STRN and STRN4.

It is found in the cytoplasm. It localises to the cell cortex. The protein resides in the cell projection. Its subcellular location is the dendritic spine. Its function is as follows. Regulates the dendritic spine distribution of CTTN/cortactin in hippocampal neurons, and thus controls dendritic spinogenesis and dendritic spine maintenance. Associates with the striatin-interacting phosphatase and kinase (STRIPAK) core complex to regulate dendritic spine distribution of the STRIPAK complex in hippocampal neurons. The chain is Cortactin-binding protein 2 (CTTNBP2) from Nomascus leucogenys (Northern white-cheeked gibbon).